Here is an 84-residue protein sequence, read N- to C-terminus: UPF0457 protein BT9727_3043 (84 aa).

The protein belongs to the UPF0457 family.

The chain is UPF0457 protein BT9727_3043 from Bacillus thuringiensis subsp. konkukian (strain 97-27).